The primary structure comprises 71 residues: Putative membrane protein insertion efficiency factor (71 aa).

Belongs to the UPF0161 family.

The protein resides in the cell membrane. Could be involved in insertion of integral membrane proteins into the membrane. In Desulforudis audaxviator (strain MP104C), this protein is Putative membrane protein insertion efficiency factor.